Consider the following 598-residue polypeptide: NADH-quinone oxidoreductase subunit C/D (598 aa).

The segment at 1–189 is NADH dehydrogenase I subunit C; it reads MTDQIAQNSA…DPYVLTKQKE (189 aa). Residues 213-598 form an NADH dehydrogenase I subunit D region; the sequence is DFMFLNLGPN…IDFVMSDVDR (386 aa).

The protein in the N-terminal section; belongs to the complex I 30 kDa subunit family. This sequence in the C-terminal section; belongs to the complex I 49 kDa subunit family. As to quaternary structure, NDH-1 is composed of 13 different subunits. Subunits NuoB, CD, E, F, and G constitute the peripheral sector of the complex.

It is found in the cell inner membrane. It catalyses the reaction a quinone + NADH + 5 H(+)(in) = a quinol + NAD(+) + 4 H(+)(out). In terms of biological role, NDH-1 shuttles electrons from NADH, via FMN and iron-sulfur (Fe-S) centers, to quinones in the respiratory chain. The immediate electron acceptor for the enzyme in this species is believed to be ubiquinone. Couples the redox reaction to proton translocation (for every two electrons transferred, four hydrogen ions are translocated across the cytoplasmic membrane), and thus conserves the redox energy in a proton gradient. This Proteus mirabilis (strain HI4320) protein is NADH-quinone oxidoreductase subunit C/D.